A 905-amino-acid polypeptide reads, in one-letter code: DNA mismatch repair protein MutS (905 aa).

The disordered stretch occupies residues Met-1–Lys-95. Over residues Asn-38–Ala-50 the composition is skewed to basic and acidic residues. Gly-721–Ser-728 lines the ATP pocket.

Belongs to the DNA mismatch repair MutS family.

Its function is as follows. This protein is involved in the repair of mismatches in DNA. It is possible that it carries out the mismatch recognition step. This protein has a weak ATPase activity. This is DNA mismatch repair protein MutS from Synechococcus sp. (strain CC9902).